A 136-amino-acid polypeptide reads, in one-letter code: Ribosome-binding factor A (136 aa).

A disordered region spans residues A116–Q136.

This sequence belongs to the RbfA family. In terms of assembly, monomer. Binds 30S ribosomal subunits, but not 50S ribosomal subunits or 70S ribosomes.

It localises to the cytoplasm. One of several proteins that assist in the late maturation steps of the functional core of the 30S ribosomal subunit. Associates with free 30S ribosomal subunits (but not with 30S subunits that are part of 70S ribosomes or polysomes). Required for efficient processing of 16S rRNA. May interact with the 5'-terminal helix region of 16S rRNA. The sequence is that of Ribosome-binding factor A from Lachnoclostridium phytofermentans (strain ATCC 700394 / DSM 18823 / ISDg) (Clostridium phytofermentans).